Consider the following 81-residue polypeptide: Defensin-like protein 311 (81 aa).

The N-terminal stretch at 1-24 (MEKISAFFVILFLVSSCLVTMSVG) is a signal peptide. 3 disulfide bridges follow: C27–C50, C33–C57, and C41–C59.

This sequence belongs to the DEFL family.

The protein resides in the secreted. The sequence is that of Defensin-like protein 311 from Arabidopsis thaliana (Mouse-ear cress).